The primary structure comprises 548 residues: Probable malate:quinone oxidoreductase (548 aa).

The segment at 521–548 is disordered; sequence DKPQAADSTPKPQLKPQPVQKEVADIAL. Over residues 530–541 the composition is skewed to low complexity; sequence PKPQLKPQPVQK.

This sequence belongs to the MQO family. FAD serves as cofactor.

It catalyses the reaction (S)-malate + a quinone = a quinol + oxaloacetate. Its pathway is carbohydrate metabolism; tricarboxylic acid cycle; oxaloacetate from (S)-malate (quinone route): step 1/1. The sequence is that of Probable malate:quinone oxidoreductase from Escherichia coli O17:K52:H18 (strain UMN026 / ExPEC).